The chain runs to 381 residues: F-box/LRR-repeat protein At4g14103 (381 aa).

Residues 7–60 (RDVISSLPDDISSHILSFLPTKEAASTSVLSKKWRYLFAFVPNLDLDDSVYLNP) form the F-box domain. LRR repeat units follow at residues 118 to 146 (DLHL…KLRF), 171 to 196 (HFEE…VLDD), 218 to 243 (SWQE…KFTD), 249 to 274 (YPKV…LINY), 299 to 330 (TLYL…TIES), and 331 to 356 (NPRV…IFQG).

This is F-box/LRR-repeat protein At4g14103 from Arabidopsis thaliana (Mouse-ear cress).